The sequence spans 68 residues: DNA-directed RNA polymerase subunit omega (68 aa).

It belongs to the RNA polymerase subunit omega family. In terms of assembly, the RNAP catalytic core consists of 2 alpha, 1 beta, 1 beta' and 1 omega subunit. When a sigma factor is associated with the core the holoenzyme is formed, which can initiate transcription.

The enzyme catalyses RNA(n) + a ribonucleoside 5'-triphosphate = RNA(n+1) + diphosphate. In terms of biological role, promotes RNA polymerase assembly. Latches the N- and C-terminal regions of the beta' subunit thereby facilitating its interaction with the beta and alpha subunits. In Desulfatibacillum aliphaticivorans, this protein is DNA-directed RNA polymerase subunit omega.